A 258-amino-acid chain; its full sequence is UPF0246 protein Jann_0444 (258 aa).

The protein belongs to the UPF0246 family.

This chain is UPF0246 protein Jann_0444, found in Jannaschia sp. (strain CCS1).